Reading from the N-terminus, the 556-residue chain is ATP synthase subunit alpha 2 (556 aa).

ATP is bound at residue 177 to 184 (GDRATGKT). The segment at 514–556 (GGHAEDAADDMGGALDGEHASGDATSIAPTPPGGAEAGAPRKR) is disordered. Residues 546 to 556 (GGAEAGAPRKR) are compositionally biased toward low complexity.

The protein belongs to the ATPase alpha/beta chains family. As to quaternary structure, F-type ATPases have 2 components, CF(1) - the catalytic core - and CF(0) - the membrane proton channel. CF(1) has five subunits: alpha(3), beta(3), gamma(1), delta(1), epsilon(1). CF(0) has three main subunits: a(1), b(2) and c(9-12). The alpha and beta chains form an alternating ring which encloses part of the gamma chain. CF(1) is attached to CF(0) by a central stalk formed by the gamma and epsilon chains, while a peripheral stalk is formed by the delta and b chains.

The protein resides in the cell inner membrane. The catalysed reaction is ATP + H2O + 4 H(+)(in) = ADP + phosphate + 5 H(+)(out). Its function is as follows. Produces ATP from ADP in the presence of a proton gradient across the membrane. The alpha chain is a regulatory subunit. The polypeptide is ATP synthase subunit alpha 2 (Burkholderia thailandensis (strain ATCC 700388 / DSM 13276 / CCUG 48851 / CIP 106301 / E264)).